The sequence spans 64 residues: DNA gyrase inhibitor YacG (64 aa).

Zn(2+)-binding residues include C9, C12, C28, and C32.

It belongs to the DNA gyrase inhibitor YacG family. In terms of assembly, interacts with GyrB. Requires Zn(2+) as cofactor.

Its function is as follows. Inhibits all the catalytic activities of DNA gyrase by preventing its interaction with DNA. Acts by binding directly to the C-terminal domain of GyrB, which probably disrupts DNA binding by the gyrase. This Enterobacter sp. (strain 638) protein is DNA gyrase inhibitor YacG.